The following is a 483-amino-acid chain: Proline--tRNA ligase (483 aa).

Belongs to the class-II aminoacyl-tRNA synthetase family. ProS type 3 subfamily. As to quaternary structure, homodimer.

The protein localises to the cytoplasm. It carries out the reaction tRNA(Pro) + L-proline + ATP = L-prolyl-tRNA(Pro) + AMP + diphosphate. Functionally, catalyzes the attachment of proline to tRNA(Pro) in a two-step reaction: proline is first activated by ATP to form Pro-AMP and then transferred to the acceptor end of tRNA(Pro). This Natranaerobius thermophilus (strain ATCC BAA-1301 / DSM 18059 / JW/NM-WN-LF) protein is Proline--tRNA ligase.